A 172-amino-acid chain; its full sequence is 3-hydroxydecanoyl-[acyl-carrier-protein] dehydratase (172 aa).

The active site involves histidine 71.

This sequence belongs to the thioester dehydratase family. FabA subfamily. In terms of assembly, homodimer.

It is found in the cytoplasm. The enzyme catalyses a (3R)-hydroxyacyl-[ACP] = a (2E)-enoyl-[ACP] + H2O. It catalyses the reaction (3R)-hydroxydecanoyl-[ACP] = (2E)-decenoyl-[ACP] + H2O. It carries out the reaction (2E)-decenoyl-[ACP] = (3Z)-decenoyl-[ACP]. It participates in lipid metabolism; fatty acid biosynthesis. Its function is as follows. Necessary for the introduction of cis unsaturation into fatty acids. Catalyzes the dehydration of (3R)-3-hydroxydecanoyl-ACP to E-(2)-decenoyl-ACP and then its isomerization to Z-(3)-decenoyl-ACP. Can catalyze the dehydratase reaction for beta-hydroxyacyl-ACPs with saturated chain lengths up to 16:0, being most active on intermediate chain length. The chain is 3-hydroxydecanoyl-[acyl-carrier-protein] dehydratase from Brucella abortus (strain S19).